A 414-amino-acid polypeptide reads, in one-letter code: DNA primase small subunit PriS (414 aa).

Catalysis depends on residues aspartate 98, aspartate 100, and aspartate 312.

The protein belongs to the eukaryotic-type primase small subunit family. As to quaternary structure, heterodimer of a small subunit (PriS) and a large subunit (PriL). Requires Mg(2+) as cofactor. Mn(2+) serves as cofactor.

Catalytic subunit of DNA primase, an RNA polymerase that catalyzes the synthesis of short RNA molecules used as primers for DNA polymerase during DNA replication. The small subunit contains the primase catalytic core and has DNA synthesis activity on its own. Binding to the large subunit stabilizes and modulates the activity, increasing the rate of DNA synthesis while decreasing the length of the DNA fragments, and conferring RNA synthesis capability. The DNA polymerase activity may enable DNA primase to also catalyze primer extension after primer synthesis. May also play a role in DNA repair. The sequence is that of DNA primase small subunit PriS from Methanosarcina acetivorans (strain ATCC 35395 / DSM 2834 / JCM 12185 / C2A).